The sequence spans 574 residues: Septation ring formation regulator EzrA (574 aa).

Over 1–7 the chain is Extracellular; the sequence is MSSGLIL. Residues 8–26 form a helical membrane-spanning segment; that stretch reads LIVAIVLLVIIAYLVGVII. At 27-574 the chain is on the cytoplasmic side; the sequence is RKRNDTLITS…YEKTRERIRF (548 aa). Coiled-coil stretches lie at residues 102 to 131, 161 to 190, 276 to 379, and 459 to 493; these read NFIR…REAL, ENED…FVAL, VTLD…QQEK, and QLEA…NLEE.

It belongs to the EzrA family.

The protein localises to the cell membrane. In terms of biological role, negative regulator of FtsZ ring formation; modulates the frequency and position of FtsZ ring formation. Inhibits FtsZ ring formation at polar sites. Interacts either with FtsZ or with one of its binding partners to promote depolymerization. The protein is Septation ring formation regulator EzrA of Streptococcus equi subsp. zooepidemicus (strain MGCS10565).